Here is a 158-residue protein sequence, read N- to C-terminus: Acetolactate synthase small subunit (158 aa).

One can recognise an ACT domain in the interval isoleucine 4 to glutamine 78.

Belongs to the acetolactate synthase small subunit family. Dimer of large and small chains.

It carries out the reaction 2 pyruvate + H(+) = (2S)-2-acetolactate + CO2. Its pathway is amino-acid biosynthesis; L-isoleucine biosynthesis; L-isoleucine from 2-oxobutanoate: step 1/4. It participates in amino-acid biosynthesis; L-valine biosynthesis; L-valine from pyruvate: step 1/4. In Buchnera aphidicola subsp. Schizaphis graminum (strain Sg), this protein is Acetolactate synthase small subunit (ilvH).